The chain runs to 425 residues: Glutamate-1-semialdehyde 2,1-aminomutase (425 aa).

K265 is subject to N6-(pyridoxal phosphate)lysine.

This sequence belongs to the class-III pyridoxal-phosphate-dependent aminotransferase family. HemL subfamily. As to quaternary structure, homodimer. Pyridoxal 5'-phosphate serves as cofactor.

It localises to the cytoplasm. The enzyme catalyses (S)-4-amino-5-oxopentanoate = 5-aminolevulinate. It functions in the pathway porphyrin-containing compound metabolism; protoporphyrin-IX biosynthesis; 5-aminolevulinate from L-glutamyl-tRNA(Glu): step 2/2. The chain is Glutamate-1-semialdehyde 2,1-aminomutase from Opitutus terrae (strain DSM 11246 / JCM 15787 / PB90-1).